The chain runs to 105 residues: Heat shock protein HspQ (105 aa).

The protein belongs to the HspQ family.

It localises to the cytoplasm. Involved in the degradation of certain denaturated proteins, including DnaA, during heat shock stress. The protein is Heat shock protein HspQ of Sodalis glossinidius (strain morsitans).